Reading from the N-terminus, the 133-residue chain is ATP synthase epsilon chain (133 aa).

The tract at residues 81 to 110 (AAERPEQIDTERARKAKERAEQRLASEHVD) is disordered.

The protein belongs to the ATPase epsilon chain family. F-type ATPases have 2 components, CF(1) - the catalytic core - and CF(0) - the membrane proton channel. CF(1) has five subunits: alpha(3), beta(3), gamma(1), delta(1), epsilon(1). CF(0) has three main subunits: a, b and c.

Its subcellular location is the cell membrane. Functionally, produces ATP from ADP in the presence of a proton gradient across the membrane. This is ATP synthase epsilon chain from Shouchella clausii (strain KSM-K16) (Alkalihalobacillus clausii).